The primary structure comprises 417 residues: Ribonuclease T2-like (417 aa).

The signal sequence occupies residues M1–A22. Cystine bridges form between C45/C63, C52/C99, C62/C165, C107/C157, and C229/C264. Residue H92 is part of the active site. N-linked (GlcNAc...) asparagine glycosylation is present at N115. Active-site residues include E150 and H154. Positions K274 to T296 are disordered. Basic and acidic residues predominate over residues P276–K288. N-linked (GlcNAc...) asparagine glycosylation occurs at N383.

This sequence belongs to the RNase T2 family.

Its subcellular location is the vacuole lumen. It localises to the cytoplasm. The catalysed reaction is a ribonucleotidyl-ribonucleotide-RNA + H2O = a 3'-end 3'-phospho-ribonucleotide-RNA + a 5'-end dephospho-ribonucleoside-RNA + H(+). Functionally, rnase which modulates cell survival under stress conditions. Released from the vacuole to the cytoplasm during stress to promote tRNA and rRNA cleavage and to activate separately a downstream pathway that promotes cell death. Involved in cell size, vacuolar morphology and growth at high temperatures and high salt concentration. The chain is Ribonuclease T2-like (rny1) from Emericella nidulans (strain FGSC A4 / ATCC 38163 / CBS 112.46 / NRRL 194 / M139) (Aspergillus nidulans).